Consider the following 167-residue polypeptide: Signal peptidase complex catalytic subunit SEC11 (167 aa).

The Cytoplasmic portion of the chain corresponds to 1–9 (MNLRFELQK). The helical; Signal-anchor for type II membrane protein transmembrane segment at 10 to 30 (LLNVCFLFASAYMFWQGLAIA) threads the bilayer. The Lumenal portion of the chain corresponds to 31 to 167 (TNSASPIVVV…LGLSALLGGE (137 aa)). Catalysis depends on charge relay system residues serine 44, histidine 83, and aspartate 109. An N-linked (GlcNAc...) asparagine glycan is attached at asparagine 121. Positions 153–164 (ALLGMLGLSALL) are C-terminal short (CTS) helix.

Belongs to the peptidase S26B family. As to quaternary structure, component of the signal peptidase complex (SPC) composed of a catalytic subunit SEC11 and three accessory subunits SPC1, SPC2 and SPC3. The complex induces a local thinning of the ER membrane which is used to measure the length of the signal peptide (SP) h-region of protein substrates. This ensures the selectivity of the complex towards h-regions shorter than 18-20 amino acids. SPC associates with the translocon complex.

The protein resides in the endoplasmic reticulum membrane. The enzyme catalyses Cleavage of hydrophobic, N-terminal signal or leader sequences from secreted and periplasmic proteins.. In terms of biological role, catalytic component of the signal peptidase complex (SPC) which catalyzes the cleavage of N-terminal signal sequences from nascent proteins as they are translocated into the lumen of the endoplasmic reticulum. Specifically cleaves N-terminal signal peptides that contain a hydrophobic alpha-helix (h-region) shorter than 18-20 amino acids. The sequence is that of Signal peptidase complex catalytic subunit SEC11 (SEC11) from Saccharomyces cerevisiae (strain Lalvin QA23) (Baker's yeast).